Here is a 61-residue protein sequence, read N- to C-terminus: Large ribosomal subunit protein bL28 (61 aa).

A disordered region spans residues 1–26; it reads MAKDFVTGKHTRFGNTRSHALNHSRR.

Belongs to the bacterial ribosomal protein bL28 family.

This Pediococcus pentosaceus (strain ATCC 25745 / CCUG 21536 / LMG 10740 / 183-1w) protein is Large ribosomal subunit protein bL28.